A 229-amino-acid polypeptide reads, in one-letter code: MADTPVSAPVVPEVTERKSKRGTKAAAVKVPKEKKKVIAAKKPKSKGTSSHPSFFEMISDAISTLKERTGSSQYAINKFVEDKHKQLPSNFRKLLLFHLKKLVASGKLVKVKNSFKLPSARAAPAPALAKKPTIPKPKVAAKPKTAKIGAKPKAKAKVAAKTKATTKTVAKKIPAAKPKAKTAGKPKTVAAKPAKVAKTAAVASPGKKKAVPVKKVKTVKSPAGKRTRK.

Disordered stretches follow at residues 1-52 (MADT…SSHP) and 125-229 (APAL…RTRK). Residues 32-45 (KEKKKVIAAKKPKS) show a composition bias toward basic residues. The 70-residue stretch at 50-119 (SHPSFFEMIS…KVKNSFKLPS (70 aa)) folds into the H15 domain. The segment covering 125 to 138 (APALAKKPTIPKPK) has biased composition (low complexity). Basic residues predominate over residues 139–160 (VAAKPKTAKIGAKPKAKAKVAA). Composition is skewed to low complexity over residues 161 to 177 (KTKATTKTVAKKIPAAK) and 185 to 205 (KPKTVAAKPAKVAKTAAVASP). Positions 206–229 (GKKKAVPVKKVKTVKSPAGKRTRK) are enriched in basic residues.

It belongs to the histone H1/H5 family.

The protein resides in the nucleus. The protein localises to the chromosome. Functionally, histones H1 are necessary for the condensation of nucleosome chains into higher-order structures. The chain is Histone H1 from Euphorbia esula (Leafy spurge).